The following is a 371-amino-acid chain: Anhydro-N-acetylmuramic acid kinase (371 aa).

9–16 lines the ATP pocket; it reads GTSLDAVD.

Belongs to the anhydro-N-acetylmuramic acid kinase family.

The catalysed reaction is 1,6-anhydro-N-acetyl-beta-muramate + ATP + H2O = N-acetyl-D-muramate 6-phosphate + ADP + H(+). The protein operates within amino-sugar metabolism; 1,6-anhydro-N-acetylmuramate degradation. Its pathway is cell wall biogenesis; peptidoglycan recycling. Its function is as follows. Catalyzes the specific phosphorylation of 1,6-anhydro-N-acetylmuramic acid (anhMurNAc) with the simultaneous cleavage of the 1,6-anhydro ring, generating MurNAc-6-P. Is required for the utilization of anhMurNAc either imported from the medium or derived from its own cell wall murein, and thus plays a role in cell wall recycling. This Caulobacter vibrioides (strain ATCC 19089 / CIP 103742 / CB 15) (Caulobacter crescentus) protein is Anhydro-N-acetylmuramic acid kinase.